The chain runs to 345 residues: Protein RecA (345 aa).

Residue 66-73 participates in ATP binding; that stretch reads GPESSGKT.

Belongs to the RecA family.

It localises to the cytoplasm. Can catalyze the hydrolysis of ATP in the presence of single-stranded DNA, the ATP-dependent uptake of single-stranded DNA by duplex DNA, and the ATP-dependent hybridization of homologous single-stranded DNAs. It interacts with LexA causing its activation and leading to its autocatalytic cleavage. This Frankia casuarinae (strain DSM 45818 / CECT 9043 / HFP020203 / CcI3) protein is Protein RecA.